The sequence spans 58 residues: UPF0391 membrane protein Gbem_0127 (58 aa).

Transmembrane regions (helical) follow at residues W4–A24 and I33–G53.

This sequence belongs to the UPF0391 family.

The protein resides in the cell membrane. This Citrifermentans bemidjiense (strain ATCC BAA-1014 / DSM 16622 / JCM 12645 / Bem) (Geobacter bemidjiensis) protein is UPF0391 membrane protein Gbem_0127.